A 362-amino-acid chain; its full sequence is O-methyltransferase 13 (362 aa).

Residues Ser-181, Gly-205, Asp-228, Asp-248, and Lys-262 each contribute to the S-adenosyl-L-homocysteine site. Residue Asp-228 coordinates S-adenosyl-L-methionine. His-266 serves as the catalytic Proton acceptor.

This sequence belongs to the class I-like SAM-binding methyltransferase superfamily. Cation-independent O-methyltransferase family. As to quaternary structure, homodimer. Mainly expressed in vascular and cortical tissues.

The catalysed reaction is dopamine + S-adenosyl-L-methionine = 3-methoxytyramine + S-adenosyl-L-homocysteine + H(+). The protein operates within aromatic compound metabolism. It functions in the pathway alkaloid biosynthesis. O-methyltransferase participating in the biosynthesis of natural products derived from phenylethylamine, including mescaline, a natural hallucinogen potentially used in psychotherapeutic treatments. Catalyzes the O-methylation of dopamine and 4,5-dihydroxy-3-methoxyphenethylamine. This is O-methyltransferase 13 from Lophophora williamsii (Peyote).